The sequence spans 83 residues: Mu-theraphotoxin-Hhn2p (83 aa).

Positions 1–21 (MKASMYLALAGLVLLFVVGYA) are cleaved as a signal peptide. Residues 22-48 (SESEEKEFPRELLSKIFAVDDFKGEER) constitute a propeptide that is removed on maturation. Intrachain disulfides connect C50–C65, C57–C70, and C64–C77. Position 81 is a leucine amide (L81).

It belongs to the neurotoxin 10 (Hwtx-1) family. 15 (Hntx-3) subfamily. As to quaternary structure, monomer. In terms of tissue distribution, expressed by the venom gland.

Its subcellular location is the secreted. In terms of biological role, lethal neurotoxin. Selectively blocks tetrodotoxin-sensitive voltage-gated sodium channels (Nav). Does not affect tetrodotoxin-resistant voltage-gated sodium channels or calcium channels. The polypeptide is Mu-theraphotoxin-Hhn2p (Cyriopagopus hainanus (Chinese bird spider)).